Consider the following 142-residue polypeptide: Putative pterin-4-alpha-carbinolamine dehydratase (142 aa).

Belongs to the pterin-4-alpha-carbinolamine dehydratase family.

It catalyses the reaction (4aS,6R)-4a-hydroxy-L-erythro-5,6,7,8-tetrahydrobiopterin = (6R)-L-erythro-6,7-dihydrobiopterin + H2O. The polypeptide is Putative pterin-4-alpha-carbinolamine dehydratase (pcbd-1) (Caenorhabditis elegans).